A 196-amino-acid chain; its full sequence is Glycerol-3-phosphate acyltransferase (196 aa).

A run of 5 helical transmembrane segments spans residues 4–24, 56–76, 80–100, 114–134, and 155–175; these read LTLT…AILV, ATVL…AYFL, SLYL…PIFF, TLLP…VLVV, and VYFL…LILF.

It belongs to the PlsY family. Probably interacts with PlsX.

It localises to the cell inner membrane. It catalyses the reaction an acyl phosphate + sn-glycerol 3-phosphate = a 1-acyl-sn-glycero-3-phosphate + phosphate. The protein operates within lipid metabolism; phospholipid metabolism. Catalyzes the transfer of an acyl group from acyl-phosphate (acyl-PO(4)) to glycerol-3-phosphate (G3P) to form lysophosphatidic acid (LPA). This enzyme utilizes acyl-phosphate as fatty acyl donor, but not acyl-CoA or acyl-ACP. The chain is Glycerol-3-phosphate acyltransferase from Colwellia psychrerythraea (strain 34H / ATCC BAA-681) (Vibrio psychroerythus).